Reading from the N-terminus, the 185-residue chain is Ribosome-recycling factor (185 aa).

It belongs to the RRF family.

It is found in the cytoplasm. In terms of biological role, responsible for the release of ribosomes from messenger RNA at the termination of protein biosynthesis. May increase the efficiency of translation by recycling ribosomes from one round of translation to another. In Geobacter metallireducens (strain ATCC 53774 / DSM 7210 / GS-15), this protein is Ribosome-recycling factor.